Reading from the N-terminus, the 634-residue chain is DNA-directed RNA polymerase subunit gamma (634 aa).

Zn(2+)-binding residues include Cys74, Cys76, Cys89, and Cys92. Positions 471, 473, and 475 each coordinate Mg(2+).

It belongs to the RNA polymerase beta' chain family. RpoC1 subfamily. In terms of assembly, in cyanobacteria the RNAP catalytic core is composed of 2 alpha, 1 beta, 1 beta', 1 gamma and 1 omega subunit. When a sigma factor is associated with the core the holoenzyme is formed, which can initiate transcription. Requires Mg(2+) as cofactor. Zn(2+) is required as a cofactor.

It carries out the reaction RNA(n) + a ribonucleoside 5'-triphosphate = RNA(n+1) + diphosphate. In terms of biological role, DNA-dependent RNA polymerase catalyzes the transcription of DNA into RNA using the four ribonucleoside triphosphates as substrates. This is DNA-directed RNA polymerase subunit gamma from Prochlorococcus marinus (strain MIT 9215).